Consider the following 222-residue polypeptide: Voltage-dependent calcium channel gamma-1 subunit (222 aa).

At 1–10 (MSPTEAPKVR) the chain is on the cytoplasmic side. A helical transmembrane segment spans residues 11–29 (VTLFCILVGIVLAMTAVVS). Residues 30–108 (DHWAVLSPHM…TQKEYSISAA (79 aa)) are Extracellular-facing. Asn-43 and Asn-79 each carry an N-linked (GlcNAc...) asparagine glycan. The cysteines at positions 57 and 80 are disulfide-linked. The helical transmembrane segment at 109–129 (AISVFSLGFLIMGTICALMAF) threads the bilayer. The Cytoplasmic portion of the chain corresponds to 130 to 134 (RKKRD). The helical transmembrane segment at 135 to 155 (YLLRPASMFYVFAGLCLFVSL) threads the bilayer. The Extracellular portion of the chain corresponds to 156–179 (EVMRQSVKRMIDSEDTVWIEYYYS). The helical transmembrane segment at 180–204 (WSFACACAAFVLLFLGGISLLLFSL) threads the bilayer. Residues 205 to 222 (PRMPQNPWESCMDAEPEH) lie on the Cytoplasmic side of the membrane.

Belongs to the PMP-22/EMP/MP20 family. CACNG subfamily. As to quaternary structure, component of a calcium channel complex consisting of a pore-forming alpha subunit (CACNA1S) and the ancillary subunits CACNB1 or CACNB2, CACNG1 and CACNA2D1. The channel complex contains alpha, beta, gamma and delta subunits in a 1:1:1:1 ratio, i.e. it contains either CACNB1 or CACNB2. In terms of processing, N-glycosylated. Skeletal muscle (at protein level).

It is found in the cell membrane. The protein resides in the sarcolemma. Regulatory subunit of the voltage-gated calcium channel that gives rise to L-type calcium currents in skeletal muscle. Regulates channel inactivation kinetics. The chain is Voltage-dependent calcium channel gamma-1 subunit (CACNG1) from Oryctolagus cuniculus (Rabbit).